Here is a 455-residue protein sequence, read N- to C-terminus: 1-deoxy-D-xylulose 5-phosphate reductoisomerase (455 aa).

6 residues coordinate NADPH: Thr-30, Gly-31, Ser-32, Ile-33, Gln-63, and Asn-159. Lys-160 provides a ligand contact to 1-deoxy-D-xylulose 5-phosphate. Residue Glu-161 participates in NADPH binding. Asp-185 contacts Mn(2+). 1-deoxy-D-xylulose 5-phosphate is bound by residues Ser-186 and Glu-187. Glu-187 contributes to the Mn(2+) binding site. Positions 205–214 (YATAKQSIQP) are enriched in polar residues. Residues 205–233 (YATAKQSIQPESVRATDPPSSTTDSPAKT) form a disordered region. 1-deoxy-D-xylulose 5-phosphate-binding residues include Ser-246 and His-269. NADPH is bound at residue Gly-275. Ser-282, Asn-287, Lys-288, and Glu-291 together coordinate 1-deoxy-D-xylulose 5-phosphate. Glu-291 contributes to the Mn(2+) binding site.

Belongs to the DXR family. The cofactor is Mg(2+). Requires Mn(2+) as cofactor.

The catalysed reaction is 2-C-methyl-D-erythritol 4-phosphate + NADP(+) = 1-deoxy-D-xylulose 5-phosphate + NADPH + H(+). The protein operates within isoprenoid biosynthesis; isopentenyl diphosphate biosynthesis via DXP pathway; isopentenyl diphosphate from 1-deoxy-D-xylulose 5-phosphate: step 1/6. In terms of biological role, catalyzes the NADPH-dependent rearrangement and reduction of 1-deoxy-D-xylulose-5-phosphate (DXP) to 2-C-methyl-D-erythritol 4-phosphate (MEP). The protein is 1-deoxy-D-xylulose 5-phosphate reductoisomerase of Rhodopirellula baltica (strain DSM 10527 / NCIMB 13988 / SH1).